We begin with the raw amino-acid sequence, 260 residues long: Small ribosomal subunit protein uS2 (260 aa).

The segment at 240 to 260 is disordered; the sequence is VLKPKLPYQPNRRPYQETVKK.

It belongs to the universal ribosomal protein uS2 family.

The chain is Small ribosomal subunit protein uS2 from Phytoplasma australiense.